Reading from the N-terminus, the 70-residue chain is Conotoxin Lt11.2 (70 aa).

Positions 1–26 are cleaved as a signal peptide; the sequence is MMFRLTSVSCFLLFIVFLNLVVLTNA. 4 cysteine pairs are disulfide-bonded: Cys-27-Cys-41, Cys-34-Cys-46, Cys-40-Cys-50, and Cys-45-Cys-54. Position 57 is a proline amide (Pro-57). The propeptide occupies 61 to 70; it reads EKLQEFFRQR.

It belongs to the conotoxin I2 superfamily. In terms of tissue distribution, expressed by the venom duct.

It localises to the secreted. This Conus litteratus (Lettered cone) protein is Conotoxin Lt11.2.